A 583-amino-acid polypeptide reads, in one-letter code: Kelch-like protein 35 (583 aa).

Positions 41-119 constitute a BTB domain; it reads TDVVLRAGGR…VYGAGVRLRA (79 aa). A BACK domain is found at 146–248; the sequence is LEGRLRAANS…LEHVRLPLLA (103 aa). Kelch repeat units follow at residues 301–350, 352–394, 395–441, 443–489, 490–531, and 533–579; these read VIVV…ALRN, VYVS…VVQG, QLFA…SCAG, LFVI…SLED, TIYV…VCDG, and VHIL…TIIQ.

This is Kelch-like protein 35 (KLHL35) from Homo sapiens (Human).